Reading from the N-terminus, the 326-residue chain is GTPase IMAP family member 5 (326 aa).

Residues 1-297 are Cytoplasmic-facing; sequence MEDHGFEELS…MLCRVTSCLD (297 aa). Positions 42–245 constitute an AIG1-type G domain; it reads SGLLRILLVG…HSNDLFVYTQ (204 aa). Residues 51-59, serine 72, 169-171, and asparagine 206 each bind GTP; these read GKSGCGKSA and HKE. The chain crosses the membrane as a helical; Anchor for type IV membrane protein span at residues 298-318; it reads WHIAVSVLLIVLGLTLLITLI. Topologically, residues 319-326 are lumenal; the sequence is NMYIGRWK.

This sequence belongs to the TRAFAC class TrmE-Era-EngA-EngB-Septin-like GTPase superfamily. AIG1/Toc34/Toc159-like paraseptin GTPase family. IAN subfamily. In terms of assembly, interacts with BAD, BAK1, BAX, BCL2, BCL2L1/Bcl-xL and BCL2L11/BimEL. The interaction with BAX is increased, when cells initiate apoptosis upon IL2 withdrawal. Forms a complex with BCL2L1 or MCL1 and HSPA8/HSC70; the interaction between HSPA8 and BCL2L1 or MCL1 is impaired in the absence of GIMAP5. May interact (via N-terminus) with microtubules. As to expression, primarily expressed in spleen, heart, lung and intestine and, at lower levels, in kidney, stomach and muscle. Expressed in thymus and lymph nodes (at protein level). In the spleen, expressed in periarteriolar lymphatic sheets. Isoform 2: Expressed at higher levels in T lymphocytes compared to isoform 1.

Its subcellular location is the lysosome membrane. It localises to the endosome. The protein localises to the multivesicular body membrane. The protein resides in the endosome membrane. In terms of biological role, required for mitochondrial integrity and T-cell survival. May contribute to T-cell quiescence. Plays a role in T lymphocyte development and the optimal generation of CD4/CD8 double-positive thymocytes. Inhibitor of GSK3A, possibly by sequestering GSK3A in cytoplasmic vesicles and impairing its translocation to the nucleus. Consequently, impairs GSK3A-dependent transcriptional program and regulation of the DNA damage response occurring during T cells proliferation. Required for the survival of peripheral T cells, natural killer (NK) and NK T-cell development and the maintenance of normal liver function. Promotes the survival of quiescent T-cells. May regulate Ca(2+) homeostasis by modulating lysosomal Ca(2+) stores, preventing its accumulation in the absence of T cell activation. May play a role in mitochondrial DNA segregation in hematopoietic tissues. Is a regulator of liver endothelial cell homeostasis. The sequence is that of GTPase IMAP family member 5 (Gimap5) from Rattus norvegicus (Rat).